Reading from the N-terminus, the 580-residue chain is XK-related protein 7 (580 aa).

Positions 1 to 22 (MAAKSDGAAAVAGPGPEGPAGA) are enriched in low complexity. The segment at 1-28 (MAAKSDGAAAVAGPGPEGPAGADRGGAG) is disordered. Helical transmembrane passes span 59–79 (WVLCALLVFFSDGATDLWLAA), 89–109 (YFGLTLLFVLLPSLVVQLLSF), 260–280 (LLTALSISASLVSLAWTLASY), 303–323 (VLWHLFTIAARTLAFALFASV), 326–346 (LYFGIFIVAHWCIMTFWVIQG), 355–375 (WEEIIYNMVVGIIYIFCWFNV), 384–404 (VTLYYCIVLLENAALTGFWYS), and 415–435 (LILVCVVASSFALGIFFMCVY). The tract at residues 470-516 (TSPPRSLPRTTGAERDGAAVGGERAGTPTPPVFQVRPGLPPTPVARP) is disordered.

It belongs to the XK family.

The protein localises to the cell membrane. The chain is XK-related protein 7 from Rattus norvegicus (Rat).